Consider the following 194-residue polypeptide: MITKDPIDLFNIWYQEVLKNYSKDPTAMVLATCSKDLKPSARVVLLKQHSDEGFVFFTNMNSRKGKEISENPFVSLVFDWRQISKQVRIEGKIETLSPEDSDRYYATRSRGSQISACCSKQSNILEDKQEFITNVQKMTKEFMGKPVPRPSYWMGLRVVPMLIEFWQEGVDRIHTRYQYTRTDKHGWSIVELYP.

Residues 42–47 (RVVLLK), 57–58 (FT), arginine 63, lysine 64, and glutamine 86 each bind FMN. Lysine 47 is a binding site for substrate. The substrate site is built by tyrosine 104, arginine 108, and serine 112. Residues 121–122 (QS) and tryptophan 166 each bind FMN. Substrate is bound at residue 172-174 (RIH). Arginine 176 contributes to the FMN binding site.

The protein belongs to the pyridoxamine 5'-phosphate oxidase family. As to quaternary structure, homodimer. FMN is required as a cofactor.

The enzyme catalyses pyridoxamine 5'-phosphate + O2 + H2O = pyridoxal 5'-phosphate + H2O2 + NH4(+). The catalysed reaction is pyridoxine 5'-phosphate + O2 = pyridoxal 5'-phosphate + H2O2. It participates in cofactor metabolism; pyridoxal 5'-phosphate salvage; pyridoxal 5'-phosphate from pyridoxamine 5'-phosphate: step 1/1. Its pathway is cofactor metabolism; pyridoxal 5'-phosphate salvage; pyridoxal 5'-phosphate from pyridoxine 5'-phosphate: step 1/1. In terms of biological role, catalyzes the oxidation of either pyridoxine 5'-phosphate (PNP) or pyridoxamine 5'-phosphate (PMP) into pyridoxal 5'-phosphate (PLP). The chain is Pyridoxine/pyridoxamine 5'-phosphate oxidase from Ehrlichia ruminantium (strain Welgevonden).